The following is a 248-amino-acid chain: Triosephosphate isomerase (248 aa).

The substrate site is built by Asn-10 and Lys-12. The active-site Electrophile is His-95. Catalysis depends on Glu-165, which acts as the Proton acceptor.

Belongs to the triosephosphate isomerase family. In terms of assembly, homodimer.

It carries out the reaction D-glyceraldehyde 3-phosphate = dihydroxyacetone phosphate. It participates in carbohydrate biosynthesis; gluconeogenesis. Its pathway is carbohydrate degradation; glycolysis; D-glyceraldehyde 3-phosphate from glycerone phosphate: step 1/1. The protein is Triosephosphate isomerase (TPI1) of Kluyveromyces lactis (strain ATCC 8585 / CBS 2359 / DSM 70799 / NBRC 1267 / NRRL Y-1140 / WM37) (Yeast).